The following is a 185-amino-acid chain: MINEIKKEAQERMGKTLEALGHAFAKIRTGRAHPSILDSVMVSYYGADTPLRQVANVTVEDSRTLALAVFDKSMIQAVEKAIMTSDLGLNPATAGTTIRVPMPALTEETRKGYTKQARAEAEQARVSVRNIRRDALAQLKDLQKEKEISEDEERRAGDDVQKLTDKFIGEIEKALEAKEADLMAV.

The protein belongs to the RRF family.

It is found in the cytoplasm. In terms of biological role, responsible for the release of ribosomes from messenger RNA at the termination of protein biosynthesis. May increase the efficiency of translation by recycling ribosomes from one round of translation to another. In Pseudomonas aeruginosa (strain LESB58), this protein is Ribosome-recycling factor.